The following is a 611-amino-acid chain: Phosphatidylinositol 3,4,5-trisphosphate 3-phosphatase and protein-tyrosine-phosphatase PTEN2A (611 aa).

Disordered stretches follow at residues 1-42 (MSSE…GVAS) and 87-109 (GIRL…SSAT). Serine 91 carries the phosphoserine modification. The segment covering 100–109 (TTTEGTSSAT) has biased composition (low complexity). The 180-residue stretch at 145–324 (RRYQEGGFDL…KYFERILTYF (180 aa)) folds into the Phosphatase tensin-type domain. Cysteine 263 (phosphocysteine intermediate) is an active-site residue. A C2 tensin-type domain is found at 331 to 458 (GRRCMLRGFR…FMVEVVLADI (128 aa)). Over residues 462 to 486 (IPTNPSSETASKTPEETSAANSSPV) the composition is skewed to polar residues. A disordered region spans residues 462–589 (IPTNPSSETA…VNASSSSESE (128 aa)). Over residues 495 to 507 (PDKETENPDKDDV) the composition is skewed to basic and acidic residues. Phosphoserine is present on serine 509. Composition is skewed to polar residues over residues 514-530 (DSTG…SQTP) and 549-565 (VSIS…QGVT).

This sequence belongs to the PTEN phosphatase protein family. As to expression, expressed in seedlings, roots, stems, leaves, flowers and siliques. However, at protein level, not observed in older leaves and mature siliques.

The enzyme catalyses O-phospho-L-tyrosyl-[protein] + H2O = L-tyrosyl-[protein] + phosphate. It catalyses the reaction a 1,2-diacyl-sn-glycero-3-phospho-(1D-myo-inositol-3,4,5-trisphosphate) + H2O = a 1,2-diacyl-sn-glycero-3-phospho-(1D-myo-inositol-4,5-bisphosphate) + phosphate. Functionally, binds phosphatidic acid. Protein tyrosine phosphatase that also exhibits lipid phosphatase activity. Hydrolyzed poorly p-nitrophenyl phosphate (p-NPP). Can use PtdIns isomers as substrates. Removes efficiently phosphate from the D3 position of the inositol ring, less from the D4 position and not at all from the D5 position on monophosphorylated PtdIns isomers (PIPs). The presence of a phosphate group in the D5 position on PIP(2) isomers reduces lipid phosphatase activity. Mostly active on PtdIns(3)P and PtdIns(3,4)P(2), to a lower extent, on PtdIns(4)P and PtdIns(3,5)P(2), but barely against PtdIns(3,4,5)P(3) as substrate. The protein is Phosphatidylinositol 3,4,5-trisphosphate 3-phosphatase and protein-tyrosine-phosphatase PTEN2A of Arabidopsis thaliana (Mouse-ear cress).